We begin with the raw amino-acid sequence, 223 residues long: MTSEVIEDEKQFYSKAKTYWKEVPATVDGMLGGYGHISSIDINSSRKFLQRFLREGQNKTGTSYALDCGAGIGRITKRLLLPLFGVVDMVDVTEDFLVKAKTYLGEEGKRVRNFFCCGLQDFSPEPQSYDVIWIQWVIGHLTDQHLAEFLRRCKRGLRPNGIIVIKDNMAQEGVILDDVDSSVCRALDVVHRIVRSAGLSLLAQERQENLPDEIYHVYSLALR.

An N-acetylmethionine modification is found at methionine 1. Threonine 2 is modified (N-acetylthreonine; in N-terminal Xaa-Pro-Lys N-methyltransferase 1, N-terminally processed). S-adenosyl-L-methionine contacts are provided by residues glycine 69, arginine 74, 91 to 93 (DVT), 119 to 120 (LQ), and glutamine 135.

This sequence belongs to the methyltransferase superfamily. NTM1 family.

It is found in the nucleus. It carries out the reaction N-terminal L-alanyl-L-prolyl-L-lysyl-[protein] + 3 S-adenosyl-L-methionine = N-terminal N,N,N-trimethyl-L-alanyl-L-prolyl-L-lysyl-[protein] + 3 S-adenosyl-L-homocysteine + 3 H(+). It catalyses the reaction N-terminal L-seryl-L-prolyl-L-lysyl-[protein] + 3 S-adenosyl-L-methionine = N-terminal N,N,N-trimethyl-L-seryl-L-prolyl-L-lysyl-[protein] + 3 S-adenosyl-L-homocysteine + 3 H(+). The enzyme catalyses N-terminal L-prolyl-L-prolyl-L-lysyl-[protein] + 2 S-adenosyl-L-methionine = N-terminal N,N-dimethyl-L-prolyl-L-prolyl-L-lysyl-[protein] + 2 S-adenosyl-L-homocysteine + 2 H(+). Distributive alpha-N-methyltransferase that methylates the N-terminus of target proteins containing the N-terminal motif [Ala/Gly/Pro/Ser]-Pro-Lys when the initiator Met is cleaved. Specifically catalyzes mono-, di- or tri-methylation of the exposed alpha-amino group of the Ala, Gly or Ser residue in the [Ala/Gly/Ser]-Pro-Lys motif and mono- or di-methylation of Pro in the Pro-Pro-Lys motif. Some of the substrates may be primed by NTMT2-mediated monomethylation. Catalyzes the trimethylation of the N-terminal Gly in CENPA (after removal of Met-1). Responsible for the N-terminal methylation of KLHL31, MYL2, MYL3, RB1, RCC1, RPL23A and SET. Required during mitosis for normal bipolar spindle formation and chromosome segregation via its action on RCC1. The chain is N-terminal Xaa-Pro-Lys N-methyltransferase 1 (NTMT1) from Bos taurus (Bovine).